A 183-amino-acid chain; its full sequence is 2-C-methyl-D-erythritol 2,4-cyclodiphosphate synthase (183 aa).

Asp10 and His12 together coordinate a divalent metal cation. 4-CDP-2-C-methyl-D-erythritol 2-phosphate is bound by residues Asp10 to His12 and His38 to Ser39. Residue His46 coordinates a divalent metal cation. 4-CDP-2-C-methyl-D-erythritol 2-phosphate is bound by residues Asp60–Gly62 and Phe65–Asp69.

This sequence belongs to the IspF family. Homotrimer. A divalent metal cation serves as cofactor.

It carries out the reaction 4-CDP-2-C-methyl-D-erythritol 2-phosphate = 2-C-methyl-D-erythritol 2,4-cyclic diphosphate + CMP. It functions in the pathway isoprenoid biosynthesis; isopentenyl diphosphate biosynthesis via DXP pathway; isopentenyl diphosphate from 1-deoxy-D-xylulose 5-phosphate: step 4/6. Its function is as follows. Involved in the biosynthesis of isopentenyl diphosphate (IPP) and dimethylallyl diphosphate (DMAPP), two major building blocks of isoprenoid compounds. Catalyzes the conversion of 4-diphosphocytidyl-2-C-methyl-D-erythritol 2-phosphate (CDP-ME2P) to 2-C-methyl-D-erythritol 2,4-cyclodiphosphate (ME-CPP) with a corresponding release of cytidine 5-monophosphate (CMP). This is 2-C-methyl-D-erythritol 2,4-cyclodiphosphate synthase from Verminephrobacter eiseniae (strain EF01-2).